The primary structure comprises 396 residues: Phosphoglycerate kinase (396 aa).

Residues 20–22 (DIN), R35, 58–61 (HQGR), R115, and R155 each bind substrate. Residues E328 and 353–356 (GGDT) contribute to the ATP site.

The protein belongs to the phosphoglycerate kinase family. In terms of assembly, monomer.

The protein localises to the cytoplasm. It catalyses the reaction (2R)-3-phosphoglycerate + ATP = (2R)-3-phospho-glyceroyl phosphate + ADP. The protein operates within carbohydrate degradation; glycolysis; pyruvate from D-glyceraldehyde 3-phosphate: step 2/5. The sequence is that of Phosphoglycerate kinase from Natronomonas pharaonis (strain ATCC 35678 / DSM 2160 / CIP 103997 / JCM 8858 / NBRC 14720 / NCIMB 2260 / Gabara) (Halobacterium pharaonis).